The following is a 319-amino-acid chain: Acetyl-coenzyme A carboxylase carboxyl transferase subunit alpha (319 aa).

Residues 32–293 (NVDTEVRALE…KAVLLNELEA (262 aa)) form the CoA carboxyltransferase C-terminal domain.

It belongs to the AccA family. As to quaternary structure, acetyl-CoA carboxylase is a heterohexamer composed of biotin carboxyl carrier protein (AccB), biotin carboxylase (AccC) and two subunits each of ACCase subunit alpha (AccA) and ACCase subunit beta (AccD).

Its subcellular location is the cytoplasm. The catalysed reaction is N(6)-carboxybiotinyl-L-lysyl-[protein] + acetyl-CoA = N(6)-biotinyl-L-lysyl-[protein] + malonyl-CoA. The protein operates within lipid metabolism; malonyl-CoA biosynthesis; malonyl-CoA from acetyl-CoA: step 1/1. Functionally, component of the acetyl coenzyme A carboxylase (ACC) complex. First, biotin carboxylase catalyzes the carboxylation of biotin on its carrier protein (BCCP) and then the CO(2) group is transferred by the carboxyltransferase to acetyl-CoA to form malonyl-CoA. This Xylella fastidiosa (strain 9a5c) protein is Acetyl-coenzyme A carboxylase carboxyl transferase subunit alpha.